The following is a 64-amino-acid chain: Phylloxin-S1 (64 aa).

The N-terminal stretch at 1–22 (MVFLKKSLLLVLFVGLVSLSIC) is a signal peptide. A propeptide spanning residues 23-44 (EENKREEHEEVEENAEKAEEKR) is cleaved from the precursor. A Glutamine amide modification is found at Gln63.

As to expression, expressed by the skin glands.

Its subcellular location is the secreted. Antimicrobial peptide against both Gram-positive and Gram-negative bacteria. This is Phylloxin-S1 from Phyllomedusa sauvagei (Sauvage's leaf frog).